We begin with the raw amino-acid sequence, 313 residues long: Homoserine O-succinyltransferase (313 aa).

Cys142 serves as the catalytic Acyl-thioester intermediate. Residues Lys163 and Ser192 each contribute to the substrate site. His235 functions as the Proton acceptor in the catalytic mechanism. Residue Glu237 is part of the active site. A substrate-binding site is contributed by Arg249.

It belongs to the MetA family.

It localises to the cytoplasm. It catalyses the reaction L-homoserine + succinyl-CoA = O-succinyl-L-homoserine + CoA. The protein operates within amino-acid biosynthesis; L-methionine biosynthesis via de novo pathway; O-succinyl-L-homoserine from L-homoserine: step 1/1. Functionally, transfers a succinyl group from succinyl-CoA to L-homoserine, forming succinyl-L-homoserine. The chain is Homoserine O-succinyltransferase from Vibrio atlanticus (strain LGP32) (Vibrio splendidus (strain Mel32)).